The sequence spans 396 residues: Interleukin enhancer-binding factor 2 homolog (396 aa).

The region spanning 22–379 is the DZF domain; that stretch reads KTFVPRHPFD…KKEGDLEEDI (358 aa). The disordered stretch occupies residues 367–396; the sequence is PTDKKEGDLEEDIDMIENENEEEGSDDGAE. Residues 374–396 are compositionally biased toward acidic residues; it reads DLEEDIDMIENENEEEGSDDGAE.

Its subcellular location is the nucleus. Its function is as follows. May regulate transcription of undefined genes. The chain is Interleukin enhancer-binding factor 2 homolog from Drosophila melanogaster (Fruit fly).